Reading from the N-terminus, the 1786-residue chain is Laminin subunit beta-1 (1786 aa).

The first 21 residues, 1 to 21 (MGLLQVFAFGVLALWGTRVCA), serve as a signal peptide directing secretion. Residues 31–270 (AEGSCYPATG…AVYDMVVRGN (240 aa)) form the Laminin N-terminal domain. An N-linked (GlcNAc...) asparagine glycan is attached at asparagine 120. Serine 250 carries the phosphoserine modification. Disulfide bonds link cysteine 271–cysteine 280, cysteine 273–cysteine 298, cysteine 300–cysteine 309, cysteine 312–cysteine 332, cysteine 335–cysteine 344, cysteine 337–cysteine 362, cysteine 365–cysteine 374, cysteine 377–cysteine 395, cysteine 398–cysteine 411, cysteine 400–cysteine 426, cysteine 428–cysteine 437, cysteine 440–cysteine 455, cysteine 458–cysteine 472, cysteine 460–cysteine 479, cysteine 481–cysteine 490, cysteine 493–cysteine 507, cysteine 510–cysteine 522, cysteine 512–cysteine 529, and cysteine 531–cysteine 540. Laminin EGF-like domains follow at residues 271–334 (CFCY…ACKK), 335–397 (CNCN…LCEP), 398–457 (CTCD…GCKS), and 458–509 (CACN…GCRP). An N-linked (GlcNAc...) asparagine glycan is attached at asparagine 356. The Laminin EGF-like 5; truncated domain occupies 510–540 (CDCDLGGALNNSCSEDSGQCSCLPHMIGRQC). An N-linked (GlcNAc...) asparagine glycan is attached at asparagine 519. In terms of domain architecture, Laminin IV type B spans 549-767 (FTTLDHYIYE…IIFSISALIH (219 aa)). Asparagine 677 is a glycosylation site (N-linked (GlcNAc...) asparagine). 32 disulfides stabilise this stretch: cysteine 773/cysteine 785, cysteine 775/cysteine 792, cysteine 794/cysteine 803, cysteine 806/cysteine 818, cysteine 821/cysteine 833, cysteine 823/cysteine 840, cysteine 842/cysteine 851, cysteine 854/cysteine 864, cysteine 867/cysteine 876, cysteine 869/cysteine 883, cysteine 886/cysteine 895, cysteine 898/cysteine 914, cysteine 917/cysteine 933, cysteine 919/cysteine 944, cysteine 946/cysteine 955, cysteine 958/cysteine 973, cysteine 976/cysteine 990, cysteine 978/cysteine 997, cysteine 1000/cysteine 1009, cysteine 1012/cysteine 1025, cysteine 1028/cysteine 1040, cysteine 1030/cysteine 1054, cysteine 1056/cysteine 1065, cysteine 1068/cysteine 1081, cysteine 1084/cysteine 1096, cysteine 1086/cysteine 1103, cysteine 1105/cysteine 1114, cysteine 1117/cysteine 1129, cysteine 1132/cysteine 1144, cysteine 1134/cysteine 1151, cysteine 1153/cysteine 1162, and cysteine 1165/cysteine 1176. 8 Laminin EGF-like domains span residues 773–820 (CECD…GCKP), 821–866 (CDCH…SCQP), 867–916 (CQCN…HCRP), 917–975 (CPCP…SCQP), 976–1027 (CQCH…DCRK), 1028–1083 (CVCN…GCGP), 1084–1131 (CNCN…ECRA), and 1132–1178 (CDCD…DCTP). The N-linked (GlcNAc...) asparagine glycan is linked to asparagine 1041. Residues 1179-1397 (CHQCFALWDA…LDLSAVAQMT (219 aa)) are domain II. Asparagine 1195, asparagine 1279, asparagine 1336, and asparagine 1343 each carry an N-linked (GlcNAc...) asparagine glycan. Residues 1216–1315 (YRETVDSVEK…LEFIKNSDIQ (100 aa)) are a coiled coil. A coiled-coil region spans residues 1368–1388 (KEQQEEQARLLDELAGKLQSL). The domain alpha stretch occupies residues 1398–1430 (CGTPPGADCSESECGGPNCRTDEGEKKCGGPGC). The segment at 1431–1786 (GGLVTVAHSA…EKVAVYSTCL (356 aa)) is domain I. A coiled-coil region spans residues 1448 to 1778 (DRDVLSALAE…RSLLKDISEK (331 aa)). Asparagine 1487 is a glycosylation site (N-linked (GlcNAc...) asparagine). Serine 1496 is modified (phosphoserine). Residues asparagine 1542 and asparagine 1643 are each glycosylated (N-linked (GlcNAc...) asparagine). A Phosphoserine modification is found at serine 1666.

In terms of assembly, laminin is a complex glycoprotein, consisting of three different polypeptide chains (alpha, beta, gamma), which are bound to each other by disulfide bonds into a cross-shaped molecule comprising one long and three short arms with globules at each end. Beta-1 is a subunit of laminin-1 (laminin-111 or EHS laminin), laminin-2 (laminin-211 or merosin), laminin-6 (laminin-311 or K-laminin), laminin-8 (laminin-411), laminin-10 (laminin-511) and laminin-12 (laminin-213). Interacts with ITGB1. Widely expressed in the embryo. High levels are detected in the cerebellar basement membrane, at postnatal day 7.

It localises to the secreted. The protein localises to the extracellular space. It is found in the extracellular matrix. The protein resides in the basement membrane. In terms of biological role, binding to cells via a high affinity receptor, laminin is thought to mediate the attachment, migration and organization of cells into tissues during embryonic development by interacting with other extracellular matrix components. Involved in the organization of the laminar architecture of the cerebral cortex. It is probably required for the integrity of the basement membrane/glia limitans that serves as an anchor point for the endfeet of radial glial cells and as a physical barrier to migrating neurons. Radial glial cells play a central role in cerebral cortical development, where they act both as the proliferative unit of the cerebral cortex and a scaffold for neurons migrating toward the pial surface. This is Laminin subunit beta-1 (Lamb1) from Mus musculus (Mouse).